The chain runs to 298 residues: Ethanolamine ammonia-lyase small subunit (298 aa).

Positions 210, 231, and 261 each coordinate adenosylcob(III)alamin.

Belongs to the EutC family. The basic unit is a heterodimer which dimerizes to form tetramers. The heterotetramers trimerize; 6 large subunits form a core ring with 6 small subunits projecting outwards. The cofactor is adenosylcob(III)alamin.

It is found in the bacterial microcompartment. The enzyme catalyses ethanolamine = acetaldehyde + NH4(+). It functions in the pathway amine and polyamine degradation; ethanolamine degradation. Catalyzes the deamination of various vicinal amino-alcohols to oxo compounds. Allows this organism to utilize ethanolamine as the sole source of nitrogen and carbon in the presence of external vitamin B12. The chain is Ethanolamine ammonia-lyase small subunit from Salmonella agona (strain SL483).